Reading from the N-terminus, the 158-residue chain is uncharacterized protein (158 aa).

In terms of domain architecture, Nudix hydrolase spans 3–130; that stretch reads YLQRVTNCVL…DGHILDFMMK (128 aa). The short motif at 34–55 is the Nudix box element; sequence GKMESGESVRDSVIREYREETG. 2 residues coordinate Mg(2+): Glu-49 and Glu-53.

This sequence belongs to the Nudix hydrolase family. It depends on Mg(2+) as a cofactor.

This is an uncharacterized protein from Bacillus subtilis (strain 168).